The following is a 274-amino-acid chain: Diaminopimelate epimerase (274 aa).

N11, Q44, and N64 together coordinate substrate. C73 serves as the catalytic Proton donor. Residues 74 to 75 (GN), N157, N190, and 208 to 209 (ER) contribute to the substrate site. The active-site Proton acceptor is C217. 218–219 (GS) serves as a coordination point for substrate.

This sequence belongs to the diaminopimelate epimerase family. In terms of assembly, homodimer.

The protein localises to the cytoplasm. It carries out the reaction (2S,6S)-2,6-diaminopimelate = meso-2,6-diaminopimelate. It participates in amino-acid biosynthesis; L-lysine biosynthesis via DAP pathway; DL-2,6-diaminopimelate from LL-2,6-diaminopimelate: step 1/1. Functionally, catalyzes the stereoinversion of LL-2,6-diaminopimelate (L,L-DAP) to meso-diaminopimelate (meso-DAP), a precursor of L-lysine and an essential component of the bacterial peptidoglycan. This chain is Diaminopimelate epimerase, found in Yersinia enterocolitica serotype O:8 / biotype 1B (strain NCTC 13174 / 8081).